Consider the following 295-residue polypeptide: Elongation factor Ts (295 aa).

The segment at 79 to 82 (TDFV) is involved in Mg(2+) ion dislocation from EF-Tu.

The protein belongs to the EF-Ts family.

It is found in the cytoplasm. In terms of biological role, associates with the EF-Tu.GDP complex and induces the exchange of GDP to GTP. It remains bound to the aminoacyl-tRNA.EF-Tu.GTP complex up to the GTP hydrolysis stage on the ribosome. This Bacillus anthracis (strain A0248) protein is Elongation factor Ts.